A 419-amino-acid chain; its full sequence is uncharacterized protein (419 aa).

In terms of domain architecture, Obg spans 29–236 (PKFQDKIRIR…KLIELELKTI (208 aa)). One can recognise an OBG-type G domain in the interval 237–414 (CEIGLVGLPN…LVRGMTQLLQ (178 aa)). GTP contacts are provided by residues 243–250 (GLPNAGKS), 295–299 (DIPGI), and 364–367 (ANKA).

It belongs to the TRAFAC class OBG-HflX-like GTPase superfamily. OBG GTPase family.

The protein resides in the mitochondrion. This is an uncharacterized protein from Schizosaccharomyces pombe (strain 972 / ATCC 24843) (Fission yeast).